A 237-amino-acid chain; its full sequence is Ubiquinone biosynthesis O-methyltransferase (237 aa).

4 residues coordinate S-adenosyl-L-methionine: Arg38, Gly57, Asp78, and Met122.

Belongs to the methyltransferase superfamily. UbiG/COQ3 family.

The enzyme catalyses a 3-demethylubiquinol + S-adenosyl-L-methionine = a ubiquinol + S-adenosyl-L-homocysteine + H(+). It catalyses the reaction a 3-(all-trans-polyprenyl)benzene-1,2-diol + S-adenosyl-L-methionine = a 2-methoxy-6-(all-trans-polyprenyl)phenol + S-adenosyl-L-homocysteine + H(+). It participates in cofactor biosynthesis; ubiquinone biosynthesis. O-methyltransferase that catalyzes the 2 O-methylation steps in the ubiquinone biosynthetic pathway. This Methylococcus capsulatus (strain ATCC 33009 / NCIMB 11132 / Bath) protein is Ubiquinone biosynthesis O-methyltransferase.